An 80-amino-acid chain; its full sequence is Probable Rubredoxin-1 (80 aa).

One can recognise a Rubredoxin-like domain in the interval 19 to 72 (YRKYKCKVCGWVYDPLKGDPSQNIPPKTPFEELPDTWICPVCRGKVGKESFEPL). 4 residues coordinate Fe cation: Cys24, Cys27, Cys57, and Cys60.

Belongs to the rubredoxin family. Requires Fe(3+) as cofactor.

Functionally, rubredoxin is a small nonheme, iron protein lacking acid-labile sulfide. Its single Fe, chelated to 4 Cys, functions as an electron acceptor and may also stabilize the conformation of the molecule. This Methanocaldococcus jannaschii (strain ATCC 43067 / DSM 2661 / JAL-1 / JCM 10045 / NBRC 100440) (Methanococcus jannaschii) protein is Probable Rubredoxin-1.